We begin with the raw amino-acid sequence, 313 residues long: Myeloma-overexpressed gene protein (313 aa).

The disordered stretch occupies residues 107-129; the sequence is ERNKGDKGAQTGAGLSQEAEDVD.

In Homo sapiens (Human), this protein is Myeloma-overexpressed gene protein (MYEOV).